The primary structure comprises 246 residues: tRNA (guanine-N(7)-)-methyltransferase (246 aa).

Glu-76, Glu-101, Asp-128, and Asp-151 together coordinate S-adenosyl-L-methionine. The active site involves Asp-151. Residue Lys-155 coordinates substrate. The tract at residues Arg-157–Arg-162 is interaction with RNA. Residues Asp-187 and Thr-222–Glu-225 each bind substrate.

This sequence belongs to the class I-like SAM-binding methyltransferase superfamily. TrmB family.

It catalyses the reaction guanosine(46) in tRNA + S-adenosyl-L-methionine = N(7)-methylguanosine(46) in tRNA + S-adenosyl-L-homocysteine. The protein operates within tRNA modification; N(7)-methylguanine-tRNA biosynthesis. Catalyzes the formation of N(7)-methylguanine at position 46 (m7G46) in tRNA. This Dechloromonas aromatica (strain RCB) protein is tRNA (guanine-N(7)-)-methyltransferase.